A 172-amino-acid polypeptide reads, in one-letter code: Small ribosomal subunit protein uS5 (172 aa).

An S5 DRBM domain is found at 17–80 (LREKMIAVNR…DEARRKMVKV (64 aa)).

Belongs to the universal ribosomal protein uS5 family. Part of the 30S ribosomal subunit. Contacts proteins S4 and S8.

With S4 and S12 plays an important role in translational accuracy. In terms of biological role, located at the back of the 30S subunit body where it stabilizes the conformation of the head with respect to the body. The protein is Small ribosomal subunit protein uS5 of Ralstonia nicotianae (strain ATCC BAA-1114 / GMI1000) (Ralstonia solanacearum).